A 386-amino-acid chain; its full sequence is L-lactate dehydrogenase (386 aa).

In terms of domain architecture, FMN hydroxy acid dehydrogenase spans 1 to 380 (MIISAASDYR…SGDALSRVTR (380 aa)). Substrate is bound at residue tyrosine 24. Serine 106 and glutamine 127 together coordinate FMN. A substrate-binding site is contributed by tyrosine 129. FMN is bound at residue threonine 155. Arginine 164 is a binding site for substrate. Lysine 251 is an FMN binding site. Histidine 275 serves as the catalytic Proton acceptor. Arginine 278 serves as a coordination point for substrate. 306-330 (DSGIRSGLDVVRMLALGADAVLLGR) lines the FMN pocket.

This sequence belongs to the FMN-dependent alpha-hydroxy acid dehydrogenase family. Requires FMN as cofactor.

It localises to the cell inner membrane. It catalyses the reaction (S)-lactate + A = pyruvate + AH2. Catalyzes the conversion of L-lactate to pyruvate. Is coupled to the respiratory chain. This chain is L-lactate dehydrogenase, found in Xanthomonas campestris pv. campestris (strain B100).